The primary structure comprises 273 residues: 2,3,4,5-tetrahydropyridine-2,6-dicarboxylate N-succinyltransferase (273 aa).

Arg104 and Asp141 together coordinate substrate.

The protein belongs to the transferase hexapeptide repeat family. Homotrimer.

It localises to the cytoplasm. It catalyses the reaction (S)-2,3,4,5-tetrahydrodipicolinate + succinyl-CoA + H2O = (S)-2-succinylamino-6-oxoheptanedioate + CoA. Its pathway is amino-acid biosynthesis; L-lysine biosynthesis via DAP pathway; LL-2,6-diaminopimelate from (S)-tetrahydrodipicolinate (succinylase route): step 1/3. In Psychrobacter cryohalolentis (strain ATCC BAA-1226 / DSM 17306 / VKM B-2378 / K5), this protein is 2,3,4,5-tetrahydropyridine-2,6-dicarboxylate N-succinyltransferase.